A 1343-amino-acid chain; its full sequence is DNA-directed RNA polymerase subunit beta (1343 aa).

The protein belongs to the RNA polymerase beta chain family. As to quaternary structure, the RNAP catalytic core consists of 2 alpha, 1 beta, 1 beta' and 1 omega subunit. When a sigma factor is associated with the core the holoenzyme is formed, which can initiate transcription.

It catalyses the reaction RNA(n) + a ribonucleoside 5'-triphosphate = RNA(n+1) + diphosphate. Its function is as follows. DNA-dependent RNA polymerase catalyzes the transcription of DNA into RNA using the four ribonucleoside triphosphates as substrates. In Shewanella baltica (strain OS223), this protein is DNA-directed RNA polymerase subunit beta.